The chain runs to 320 residues: FHA domain-containing protein FHA2 (320 aa).

Position 2 is an N-acetylalanine (Ala2). Residues Ile32–His89 form the FHA domain. The segment at Val138–Glu211 is disordered. A compositionally biased stretch (acidic residues) spans Glu163 to Asp178. Residues Gly198–Arg210 are compositionally biased toward basic and acidic residues.

As to expression, widely expressed.

It is found in the nucleus. In terms of biological role, may play a role in the control of plant organ development and specifically in the regulation of stamen development. Does not show transactivation activity in yeast. This is FHA domain-containing protein FHA2 from Arabidopsis thaliana (Mouse-ear cress).